The sequence spans 800 residues: DNA topoisomerase 1 (800 aa).

Residues 1–111 (MKLVIVESPA…VKSDDFFKRV (111 aa)) form the Toprim domain. E7 and D80 together coordinate Mg(2+). Residues 132 to 568 (DNNLVNAQQA…FWNGFNHNIE (437 aa)) form the Topo IA-type catalytic domain. The interaction with DNA stretch occupies residues 166–171 (SAGRVQ). The active-site O-(5'-phospho-DNA)-tyrosine intermediate is the Y304. The C4-type zinc-finger motif lies at 600 to 627 (CPSCKTGELSLKLGKFGAFLACSNYPEC).

Belongs to the type IA topoisomerase family. In terms of assembly, monomer. It depends on Mg(2+) as a cofactor.

It catalyses the reaction ATP-independent breakage of single-stranded DNA, followed by passage and rejoining.. In terms of biological role, releases the supercoiling and torsional tension of DNA, which is introduced during the DNA replication and transcription, by transiently cleaving and rejoining one strand of the DNA duplex. Introduces a single-strand break via transesterification at a target site in duplex DNA. The scissile phosphodiester is attacked by the catalytic tyrosine of the enzyme, resulting in the formation of a DNA-(5'-phosphotyrosyl)-enzyme intermediate and the expulsion of a 3'-OH DNA strand. The free DNA strand then undergoes passage around the unbroken strand, thus removing DNA supercoils. Finally, in the religation step, the DNA 3'-OH attacks the covalent intermediate to expel the active-site tyrosine and restore the DNA phosphodiester backbone. The sequence is that of DNA topoisomerase 1 from Rickettsia bellii (strain RML369-C).